A 297-amino-acid chain; its full sequence is Leucine-rich repeat-containing protein 25 (297 aa).

The first 25 residues, 1-25, serve as a signal peptide directing secretion; sequence MGSIRTRLLWLCLLMLLALLHKSGS. Residues 26–169 are Extracellular-facing; that stretch reads QDLTCMVHPS…SCPPSWGPGT (144 aa). N-linked (GlcNAc...) asparagine glycans are attached at residues Asn44 and Asn49. LRR repeat units follow at residues 66 to 89 and 90 to 113; these read HAQVLDLSKNGLQVLPGAFFDKLE and KLQTLIVTHNQLDSVDRSLALRCD. 2 N-linked (GlcNAc...) asparagine glycosylation sites follow: Asn133 and Asn152. A helical membrane pass occupies residues 170 to 190; that stretch reads IGALVAGTISLAVAVSGSVLA. Residues 191 to 297 are Cytoplasmic-facing; it reads WRLLRRRRRA…VYCNLESLGR (107 aa). Positions 202–244 are disordered; the sequence is EHSLSKAQMSPHDIPKPVTDFLPRYSSRRPGPKAPDSPPSRFT. Phosphoserine is present on residues Ser211, Ser238, and Ser267. Phosphotyrosine is present on Tyr289.

As to quaternary structure, interacts with RIGI. Interacts with SQSTM1. Interacts with p65/RELA; this interaction promotes the degradation of RELA through autophagy.

Its subcellular location is the membrane. It localises to the cytoplasm. Its function is as follows. Plays a role in the inhibition of RLR-mediated type I interferon signaling pathway by targeting RIGI for autophagic degradation. Interacts specifically with ISG15-associated RIGI to promote interaction between RIGI and the autophagic cargo receptor p62/SQSTM1 to mediate RIGI degradation via selective autophagy. Plays also a role in the inhibition of NF-kappa-B signaling pathway and inflammatory response by promoting the degradation of p65/RELA. The chain is Leucine-rich repeat-containing protein 25 (Lrrc25) from Mus musculus (Mouse).